Reading from the N-terminus, the 315-residue chain is Homoserine O-succinyltransferase (315 aa).

Cysteine 142 serves as the catalytic Acyl-thioester intermediate. Substrate is bound by residues lysine 163 and serine 192. Histidine 235 functions as the Proton acceptor in the catalytic mechanism. Glutamate 237 is a catalytic residue. A substrate-binding site is contributed by arginine 249. The segment covering 249–258 (RDCEKSDNAP) has biased composition (basic and acidic residues). Residues 249–271 (RDCEKSDNAPKPENYFPDDDATK) form a disordered region.

Belongs to the MetA family.

It localises to the cytoplasm. It catalyses the reaction L-homoserine + succinyl-CoA = O-succinyl-L-homoserine + CoA. It functions in the pathway amino-acid biosynthesis; L-methionine biosynthesis via de novo pathway; O-succinyl-L-homoserine from L-homoserine: step 1/1. Its function is as follows. Transfers a succinyl group from succinyl-CoA to L-homoserine, forming succinyl-L-homoserine. In Pseudoalteromonas translucida (strain TAC 125), this protein is Homoserine O-succinyltransferase.